We begin with the raw amino-acid sequence, 490 residues long: GTPase Der (490 aa).

2 consecutive EngA-type G domains span residues Pro3–Leu166 and Ile203–Thr376. Residues Gly9 to Ser16, Asp56 to Ile60, Asn118 to Asp121, Gly209 to Ser216, Asp256 to Val260, and Asn321 to Asp324 contribute to the GTP site. The KH-like domain occupies Arg377–Glu461.

It belongs to the TRAFAC class TrmE-Era-EngA-EngB-Septin-like GTPase superfamily. EngA (Der) GTPase family. Associates with the 50S ribosomal subunit.

Its function is as follows. GTPase that plays an essential role in the late steps of ribosome biogenesis. In Escherichia coli O17:K52:H18 (strain UMN026 / ExPEC), this protein is GTPase Der.